The sequence spans 137 residues: uncharacterized protein (137 aa).

The chain crosses the membrane as a helical span at residues 20–42 (TVLAFKGEGALALAGLLVMAAVA).

The protein localises to the host membrane. This is an uncharacterized protein from Dryophytes versicolor (chameleon treefrog).